Consider the following 151-residue polypeptide: Small ribosomal subunit protein uS19 (151 aa).

Ala-2 bears the N-acetylalanine mark.

It belongs to the universal ribosomal protein uS19 family.

Functionally, negatively regulates lifespan. The chain is Small ribosomal subunit protein uS19 from Caenorhabditis elegans.